The following is a 757-amino-acid chain: MDYLESLDFPKVVEIVKKYALSDLGRKHLDTLKPTVNPWDELELVEELLNYFARWGEPPIKGLNDISQEVERVKSGSALEPWELLRVSVFLEGCDILKKDFEKREYSRLKETFSRLSSFRDFVEEVNRCIEQDGEISDRASPRLREIRTEKKRLASEIKRKADDFVRTHSQILQEQMYVYRDGRYLFPVKASMRNAVRGIVHHLSSSGATVFLEPDEFVELNNRVRLLEEEERLEISRILRQLTNILLSRLNDLERNVELIARFDSLYARVKFAREFNGTVVKPSSRIRLVNARHPLIPKERVVPINLELPPNKRGFIITGPNMGGKTVTVKTVGLFTALMMSGFPLPCDEGTELKVFPKIMADIGEEQSIEQSLSTFSSHMKKIVEIVKNADSDSLVILDELGSGTDPVEGAALAVAIIEDLLEKGATIFVTTHLTPVKVFAMNHPLLLNASMEFDPETLSPTYRVLVGVPGGSHAFQIAEKLGLDKRIIENARSRLSREEMELEGLIRSLHEKISLLEEEKRKLQKEREEYMKLREKYEEDYKKLRRMKIEEFDKELRELNDYIRKVKKELDQAIHVAKTGSVDEMREAVKTIEKEKKDLEQKRIEEATEEEIKPGDHVKMEGGTSVGKVVEVKSGTALVDFGFLRLKVPVSKLKKAKKEEKEESSAVSYRPSSFRTEIDIRGMTVEEAEPVVKKFIDDLMMNGISKGYIIHGKGTGKLASGVWEILRKDKRVVSFRFGTPSEGGTGVTVVEVKV.

321 to 328 lines the ATP pocket; it reads GPNMGGKT. A Smr domain is found at 681–756; sequence IDIRGMTVEE…GTGVTVVEVK (76 aa).

This sequence belongs to the DNA mismatch repair MutS family. MutS2 subfamily. Homodimer. Binds to stalled ribosomes, contacting rRNA.

Endonuclease that is involved in the suppression of homologous recombination and thus may have a key role in the control of bacterial genetic diversity. In terms of biological role, acts as a ribosome collision sensor, splitting the ribosome into its 2 subunits. Detects stalled/collided 70S ribosomes which it binds and splits by an ATP-hydrolysis driven conformational change. Acts upstream of the ribosome quality control system (RQC), a ribosome-associated complex that mediates the extraction of incompletely synthesized nascent chains from stalled ribosomes and their subsequent degradation. Probably generates substrates for RQC. The sequence is that of Endonuclease MutS2 from Thermotoga sp. (strain RQ2).